Here is a 386-residue protein sequence, read N- to C-terminus: S-adenosylmethionine synthase (386 aa).

ATP is bound at residue His14. Residue Asp16 coordinates Mg(2+). Glu42 contacts K(+). The L-methionine site is built by Glu55 and Gln98. The flexible loop stretch occupies residues 98-108 (QSGDISQGVDG). ATP contacts are provided by residues 162 to 164 (DSK), 230 to 231 (RF), Asp239, 245 to 246 (RK), Ala262, and Lys266. Asp239 provides a ligand contact to L-methionine. Lys270 lines the L-methionine pocket.

It belongs to the AdoMet synthase family. Homotetramer; dimer of dimers. Requires Mg(2+) as cofactor. K(+) serves as cofactor.

It is found in the cytoplasm. It carries out the reaction L-methionine + ATP + H2O = S-adenosyl-L-methionine + phosphate + diphosphate. Its pathway is amino-acid biosynthesis; S-adenosyl-L-methionine biosynthesis; S-adenosyl-L-methionine from L-methionine: step 1/1. In terms of biological role, catalyzes the formation of S-adenosylmethionine (AdoMet) from methionine and ATP. The overall synthetic reaction is composed of two sequential steps, AdoMet formation and the subsequent tripolyphosphate hydrolysis which occurs prior to release of AdoMet from the enzyme. The sequence is that of S-adenosylmethionine synthase from Salinibacter ruber (strain DSM 13855 / M31).